Reading from the N-terminus, the 70-residue chain is Large ribosomal subunit protein bL31 (70 aa).

Zn(2+) is bound by residues Cys16, Cys18, Cys37, and Cys40.

This sequence belongs to the bacterial ribosomal protein bL31 family. Type A subfamily. As to quaternary structure, part of the 50S ribosomal subunit. Requires Zn(2+) as cofactor.

Its function is as follows. Binds the 23S rRNA. The protein is Large ribosomal subunit protein bL31 of Klebsiella pneumoniae (strain 342).